The following is an 80-amino-acid chain: Defensin-like protein 1 (80 aa).

The N-terminal stretch at 1–29 (MAKFASIIALLFAALVLFAAFEAPTMVEA) is a signal peptide. A Pyrrolidone carboxylic acid modification is found at Q30. Cystine bridges form between C33/C80, C44/C65, C50/C74, and C54/C76.

The protein belongs to the DEFL family. In terms of assembly, forms oligomers in its native state.

It localises to the secreted. Functionally, possesses antifungal activity sensitive to inorganic cations. This chain is Defensin-like protein 1 (AFP1), found in Raphanus sativus (Radish).